The following is a 253-amino-acid chain: Small ribosomal subunit protein uS2 (253 aa).

A disordered region spans residues 226–253 (QGADNADVEKELSESVEENSAEEVDDAE). A compositionally biased stretch (acidic residues) spans 239–253 (ESVEENSAEEVDDAE).

Belongs to the universal ribosomal protein uS2 family.

The sequence is that of Small ribosomal subunit protein uS2 from Lactobacillus delbrueckii subsp. bulgaricus (strain ATCC 11842 / DSM 20081 / BCRC 10696 / JCM 1002 / NBRC 13953 / NCIMB 11778 / NCTC 12712 / WDCM 00102 / Lb 14).